We begin with the raw amino-acid sequence, 50 residues long: PsaJ-like protein asl3190 (50 aa).

The helical transmembrane segment at 21-41 threads the bilayer; sequence VLAVISISVAFSTWAIFNYIF.

It belongs to the PsaJ family.

It localises to the cellular thylakoid membrane. The protein is PsaJ-like protein asl3190 of Nostoc sp. (strain PCC 7120 / SAG 25.82 / UTEX 2576).